The chain runs to 792 residues: Phosphoenolpyruvate synthase (792 aa).

The active-site Tele-phosphohistidine intermediate is H421. Residues R511, R578, E680, G701, S702, N703, and D704 each coordinate substrate. Mg(2+) is bound at residue E680. D704 is a Mg(2+) binding site. Residue C751 is the Proton donor of the active site.

This sequence belongs to the PEP-utilizing enzyme family. Homodimer. The cofactor is Mg(2+).

It catalyses the reaction pyruvate + ATP + H2O = phosphoenolpyruvate + AMP + phosphate + 2 H(+). Its pathway is carbohydrate biosynthesis; gluconeogenesis. With respect to regulation, activated by a Pi-dependent pyrophosphorylation and inactivated by an ADP-dependent phosphorylation on a regulatory threonine. Both reactions are mediated by the bifunctional serine/threonine kinase and phosphorylase PpsR. In terms of biological role, catalyzes the phosphorylation of pyruvate to phosphoenolpyruvate. This chain is Phosphoenolpyruvate synthase (ppsA), found in Escherichia coli (strain K12).